A 119-amino-acid chain; its full sequence is Basic phospholipase A2 (119 aa).

7 cysteine pairs are disulfide-bonded: Cys-11–Cys-72, Cys-27–Cys-118, Cys-29–Cys-45, Cys-44–Cys-100, Cys-51–Cys-93, Cys-61–Cys-86, and Cys-79–Cys-91. Residues Tyr-28, Gly-30, and Gly-32 each contribute to the Ca(2+) site. His-48 is an active-site residue. Residue Asp-49 participates in Ca(2+) binding. The N-linked (GlcNAc...) asparagine glycan is linked to Asn-82. Asp-94 is a catalytic residue.

This sequence belongs to the phospholipase A2 family. Group I subfamily. D49 sub-subfamily. It depends on Ca(2+) as a cofactor. In terms of tissue distribution, expressed by the venom gland.

The protein resides in the secreted. The catalysed reaction is a 1,2-diacyl-sn-glycero-3-phosphocholine + H2O = a 1-acyl-sn-glycero-3-phosphocholine + a fatty acid + H(+). Its function is as follows. Snake venom phospholipase A2 (PLA2) that shows weak myotoxicity and induces edema in mice. Shows no cytotoxicity in vitro. Has an anticoagulant effect in vitro. PLA2 catalyzes the calcium-dependent hydrolysis of the 2-acyl groups in 3-sn-phosphoglycerides. The sequence is that of Basic phospholipase A2 from Micrurus mipartitus (Red-tailed coral snake).